A 544-amino-acid chain; its full sequence is ATP-dependent RNA helicase HAS1 (544 aa).

A compositionally biased stretch (low complexity) spans 1–10; it reads MSSTKPPTTT. Residues 1–59 are disordered; that stretch reads MSSTKPPTTTNKRKRTSNAHDEAPAKRVPEASSSKVTLDDSQPAPATSSDAVLGARSAP. Positions 18–29 are enriched in basic and acidic residues; it reads NAHDEAPAKRVP. A compositionally biased stretch (polar residues) spans 31 to 50; it reads ASSSKVTLDDSQPAPATSSD. Residues 66 to 94 carry the Q motif motif; it reads VPFSTLNLSPPTTAAIERMGFETMTEVQA. A Helicase ATP-binding domain is found at 97–273; sequence IPPLLAGKDV…RISLRPGPLY (177 aa). 110–117 lines the ATP pocket; it reads ARTGSGKT. Positions 220 to 223 match the DEAD box motif; it reads DEAD. The Helicase C-terminal domain maps to 287–456; it reads MLEQGYVVCE…DVQKQLESLI (170 aa). Residues 299–315 carry the Bipartite nuclear localization signal motif; that stretch reads QRFMLLFTFLKKNLKKK. Positions 513–544 are disordered; that stretch reads GSVKAKKSRDEDESSDDDGQPKKAYYRNRGRK.

Belongs to the DEAD box helicase family. DDX18/HAS1 subfamily. In terms of assembly, associates in the nucleolus with the 60S and pre-60S ribosomal subunits.

Its subcellular location is the nucleus. It localises to the nucleolus. It carries out the reaction ATP + H2O = ADP + phosphate + H(+). Its function is as follows. ATP-dependent RNA helicase involved in 40S ribosomal subunit biogenesis. Required for the processing and cleavage of 35S pre-rRNA at sites A0, A1, and A2, leading to mature 18S rRNA. In Cryptococcus neoformans var. neoformans serotype D (strain JEC21 / ATCC MYA-565) (Filobasidiella neoformans), this protein is ATP-dependent RNA helicase HAS1 (HAS1).